Here is a 296-residue protein sequence, read N- to C-terminus: NAD kinase (296 aa).

The active-site Proton acceptor is the D72. Residues 72–73 (DG), 146–147 (ND), R157, K174, D176, 187–192 (TAYALS), and Q247 each bind NAD(+).

It belongs to the NAD kinase family. The cofactor is a divalent metal cation.

It is found in the cytoplasm. It catalyses the reaction NAD(+) + ATP = ADP + NADP(+) + H(+). Involved in the regulation of the intracellular balance of NAD and NADP, and is a key enzyme in the biosynthesis of NADP. Catalyzes specifically the phosphorylation on 2'-hydroxyl of the adenosine moiety of NAD to yield NADP. This Pseudomonas putida (strain W619) protein is NAD kinase.